The chain runs to 188 residues: Large ribosomal subunit protein uL5 (188 aa).

The protein belongs to the universal ribosomal protein uL5 family. As to quaternary structure, part of the 50S ribosomal subunit; part of the 5S rRNA/L5/L18/L25 subcomplex. Contacts the 5S rRNA and the P site tRNA. Forms a bridge to the 30S subunit in the 70S ribosome.

Functionally, this is one of the proteins that bind and probably mediate the attachment of the 5S RNA into the large ribosomal subunit, where it forms part of the central protuberance. In the 70S ribosome it contacts protein S13 of the 30S subunit (bridge B1b), connecting the 2 subunits; this bridge is implicated in subunit movement. Contacts the P site tRNA; the 5S rRNA and some of its associated proteins might help stabilize positioning of ribosome-bound tRNAs. The polypeptide is Large ribosomal subunit protein uL5 (Aquifex pyrophilus).